The primary structure comprises 435 residues: Serine--tRNA ligase (435 aa).

L-serine is bound at residue T233–E235. Position 264–266 (R264–E266) interacts with ATP. E287 contributes to the L-serine binding site. An ATP-binding site is contributed by E351–S354. S386 contacts L-serine.

This sequence belongs to the class-II aminoacyl-tRNA synthetase family. Type-1 seryl-tRNA synthetase subfamily. Homodimer. The tRNA molecule binds across the dimer.

Its subcellular location is the cytoplasm. The enzyme catalyses tRNA(Ser) + L-serine + ATP = L-seryl-tRNA(Ser) + AMP + diphosphate + H(+). The catalysed reaction is tRNA(Sec) + L-serine + ATP = L-seryl-tRNA(Sec) + AMP + diphosphate + H(+). The protein operates within aminoacyl-tRNA biosynthesis; selenocysteinyl-tRNA(Sec) biosynthesis; L-seryl-tRNA(Sec) from L-serine and tRNA(Sec): step 1/1. In terms of biological role, catalyzes the attachment of serine to tRNA(Ser). Is also able to aminoacylate tRNA(Sec) with serine, to form the misacylated tRNA L-seryl-tRNA(Sec), which will be further converted into selenocysteinyl-tRNA(Sec). This Anaeromyxobacter dehalogenans (strain 2CP-C) protein is Serine--tRNA ligase.